The following is a 369-amino-acid chain: Chaperone protein DnaJ (369 aa).

In terms of domain architecture, J spans Ser4–Gly69. The CR-type zinc finger occupies Gly130 to Asp207. Residues Cys143, Cys146, Cys159, Cys162, Cys181, Cys184, Cys195, and Cys198 each coordinate Zn(2+). 4 CXXCXGXG motif repeats span residues Cys143–Gly150, Cys159–Gly166, Cys181–Gly188, and Cys195–Thr202.

It belongs to the DnaJ family. Homodimer. The cofactor is Zn(2+).

The protein resides in the cytoplasm. Functionally, participates actively in the response to hyperosmotic and heat shock by preventing the aggregation of stress-denatured proteins and by disaggregating proteins, also in an autonomous, DnaK-independent fashion. Unfolded proteins bind initially to DnaJ; upon interaction with the DnaJ-bound protein, DnaK hydrolyzes its bound ATP, resulting in the formation of a stable complex. GrpE releases ADP from DnaK; ATP binding to DnaK triggers the release of the substrate protein, thus completing the reaction cycle. Several rounds of ATP-dependent interactions between DnaJ, DnaK and GrpE are required for fully efficient folding. Also involved, together with DnaK and GrpE, in the DNA replication of plasmids through activation of initiation proteins. This Helicobacter pylori (strain J99 / ATCC 700824) (Campylobacter pylori J99) protein is Chaperone protein DnaJ.